We begin with the raw amino-acid sequence, 71 residues long: MPAGVPMSTYLKMFAASLLAMCAGAEVVHRYYRPDLTIPEIPPKRGELKTELLGLKERKHKPQVSQQEELK.

Over 1 to 8 (MPAGVPMS) the chain is Mitochondrial matrix. Residues 9–25 (TYLKMFAASLLAMCAGA) traverse the membrane as a helical; Signal-anchor for type II membrane protein segment. Topologically, residues 26 to 71 (EVVHRYYRPDLTIPEIPPKRGELKTELLGLKERKHKPQVSQQEELK) are mitochondrial intermembrane.

Belongs to the UQCC6 family. As to quaternary structure, interacts with UQCRC1. Interacts with UQCRQ. Interacts with UQCC5. Forms a complex, named COMB/coordinator of mitochondrial CYTB biogenesis, composed of UQCC1, UQCC2, UQCC4, UQCC5 and UQCC6; stabilizes nascent cytochrome b/MT-CYB and promotes its membrane insertion. Forms a complex, named COMA, composed of UQCC1, UQCC2 and UQCC4; activates MT-CYB translation. Forms a complex, named COMC, composed of UQCC1, UQCC2; UQCC3 and UQCC4; mediates MT-CYB hemylation and association with the first nuclear-encoded complex III subunit UQCRQ. Interacts with MT-CYB. As to expression, cardiac and skeletal muscle (at protein level).

The protein resides in the mitochondrion inner membrane. Functionally, required for the assembly and stability of the mitochondrial ubiquinol-cytochrome c reductase complex (complex III (CIII) or cytochrome b-c1 complex), a multisubunit transmembrane complex that is part of the mitochondrial electron transport chain (ETC) which drives oxidative phosphorylation. Mediates early complex III biogenesis. Participates in regulating the levels of electron transport chain proteins, and therefore energy supply, in response to changes in energy demand. Also required for cytochrome c oxidase complex (complex IV) assembly. This Homo sapiens (Human) protein is Ubiquinol-cytochrome c reductase complex assembly factor 6.